The sequence spans 334 residues: Endoplasmic reticulum junction formation protein lunapark (334 aa).

Topologically, residues 1-40 are cytoplasmic; that stretch reads MGWFFQKKKEFDFGGELDRLEMKLEEAQYNIDNIQSQKKK. A coiled-coil region spans residues 12–42; that stretch reads DFGGELDRLEMKLEEAQYNIDNIQSQKKKIL. A helical membrane pass occupies residues 41–61; it reads ILFRYTVCSLAIYTIGMAVWA. Over 62-78 the chain is Lumenal; that stretch reads SRSSILFQHPLFSKLFR. The helical transmembrane segment at 79-99 threads the bilayer; the sequence is ISLYILGVFSLYMFRWAIAWF. The stretch at 99–127 forms a coiled coil; the sequence is FCEKRLSRARMNLHKLNAEKRKILDALKS. At 100-334 the chain is on the cytoplasmic side; that stretch reads CEKRLSRARM…SVPESLTPTK (235 aa). Residues 201-227 form a C4-type; plays a role in ER morphology zinc finger; the sequence is CSHCFHHNGLASYGEKASDVRYVCLFC. A disordered region spans residues 237-315; it reads KSLPSSEMDS…SSPDASYNSV (79 aa). The span at 239-252 shows a compositional bias: polar residues; that stretch reads LPSSEMDSNLQTNP. A compositionally biased stretch (low complexity) spans 253-270; it reads SSISKGKKNNSNNTTQKG. Positions 273–283 are enriched in polar residues; it reads IISSPQVINAS. Position 284 is a phosphoserine (serine 284). Low complexity predominate over residues 297–315; sequence ALPTSPLSSSSPDASYNSV.

It belongs to the lunapark family.

It is found in the endoplasmic reticulum membrane. The protein localises to the golgi apparatus membrane. Functionally, plays a role in tubular endoplasmic reticulum network formation and maintenance. This is Endoplasmic reticulum junction formation protein lunapark (lnp1) from Schizosaccharomyces pombe (strain 972 / ATCC 24843) (Fission yeast).